The sequence spans 77 residues: uncharacterized protein (77 aa).

The chain crosses the membrane as a helical span at residues 13 to 33 (VPVIRLSVFLHFFFVFPFCLL).

The protein resides in the membrane. This is an uncharacterized protein from Saccharomyces cerevisiae (strain ATCC 204508 / S288c) (Baker's yeast).